Consider the following 233-residue polypeptide: Isoprenyl transferase (233 aa).

Asp12 is an active-site residue. Asp12 is a Mg(2+) binding site. Residues 13–16, Trp17, Arg25, His29, and 57–59 contribute to the substrate site; these read GNGR and STE. Catalysis depends on Asn60, which acts as the Proton acceptor. Substrate contacts are provided by residues Trp61, Arg63, Arg178, and 184–186; that span reads RLS. Glu197 is a Mg(2+) binding site.

The protein belongs to the UPP synthase family. As to quaternary structure, homodimer. Mg(2+) serves as cofactor.

In terms of biological role, catalyzes the condensation of isopentenyl diphosphate (IPP) with allylic pyrophosphates generating different type of terpenoids. This is Isoprenyl transferase from Thermotoga maritima (strain ATCC 43589 / DSM 3109 / JCM 10099 / NBRC 100826 / MSB8).